The primary structure comprises 296 residues: GTP cyclohydrolase FolE2 (296 aa).

Belongs to the GTP cyclohydrolase IV family.

The enzyme catalyses GTP + H2O = 7,8-dihydroneopterin 3'-triphosphate + formate + H(+). It functions in the pathway cofactor biosynthesis; 7,8-dihydroneopterin triphosphate biosynthesis; 7,8-dihydroneopterin triphosphate from GTP: step 1/1. Its function is as follows. Converts GTP to 7,8-dihydroneopterin triphosphate. In Ectopseudomonas mendocina (strain ymp) (Pseudomonas mendocina), this protein is GTP cyclohydrolase FolE2.